The following is an 81-amino-acid chain: RNA-binding protein Hfq (81 aa).

Positions 9–68 (DPYLNILRKERVPVSIFLVNGIKLQGQIESFDQFVILLKNTVSQMVYKHAISTVVPSRTI) constitute a Sm domain.

This sequence belongs to the Hfq family. In terms of assembly, homohexamer.

Functionally, RNA chaperone that binds small regulatory RNA (sRNAs) and mRNAs to facilitate mRNA translational regulation in response to envelope stress, environmental stress and changes in metabolite concentrations. Also binds with high specificity to tRNAs. The chain is RNA-binding protein Hfq from Marinomonas sp. (strain MWYL1).